Reading from the N-terminus, the 120-residue chain is Large ribosomal subunit protein uL18 (120 aa).

This sequence belongs to the universal ribosomal protein uL18 family. As to quaternary structure, part of the 50S ribosomal subunit; part of the 5S rRNA/L5/L18/L25 subcomplex. Contacts the 5S and 23S rRNAs.

In terms of biological role, this is one of the proteins that bind and probably mediate the attachment of the 5S RNA into the large ribosomal subunit, where it forms part of the central protuberance. This chain is Large ribosomal subunit protein uL18, found in Bartonella bacilliformis (strain ATCC 35685 / KC583 / Herrer 020/F12,63).